The following is a 210-amino-acid chain: Imidazole glycerol phosphate synthase subunit HisH 1 (210 aa).

In terms of domain architecture, Glutamine amidotransferase type-1 spans 3 to 210 (KIAIVDYGMC…LDNFLSFSNV (208 aa)). Cysteine 82 acts as the Nucleophile in catalysis. Catalysis depends on residues histidine 189 and glutamate 191.

In terms of assembly, heterodimer of HisH and HisF.

The protein localises to the cytoplasm. The enzyme catalyses 5-[(5-phospho-1-deoxy-D-ribulos-1-ylimino)methylamino]-1-(5-phospho-beta-D-ribosyl)imidazole-4-carboxamide + L-glutamine = D-erythro-1-(imidazol-4-yl)glycerol 3-phosphate + 5-amino-1-(5-phospho-beta-D-ribosyl)imidazole-4-carboxamide + L-glutamate + H(+). It catalyses the reaction L-glutamine + H2O = L-glutamate + NH4(+). The protein operates within amino-acid biosynthesis; L-histidine biosynthesis; L-histidine from 5-phospho-alpha-D-ribose 1-diphosphate: step 5/9. In terms of biological role, IGPS catalyzes the conversion of PRFAR and glutamine to IGP, AICAR and glutamate. The HisH subunit provides the glutamine amidotransferase activity that produces the ammonia necessary to HisF for the synthesis of IGP and AICAR. The chain is Imidazole glycerol phosphate synthase subunit HisH 1 (hisH1) from Parasynechococcus marenigrum (strain WH8102).